A 109-amino-acid chain; its full sequence is uncharacterized protein (109 aa).

This is an uncharacterized protein from Mycobacterium tuberculosis (strain CDC 1551 / Oshkosh).